Reading from the N-terminus, the 289-residue chain is 4-diphosphocytidyl-2-C-methyl-D-erythritol kinase (289 aa).

K16 is an active-site residue. An ATP-binding site is contributed by 99 to 109; that stretch reads PMGGGLGGGSS. D141 is an active-site residue.

It belongs to the GHMP kinase family. IspE subfamily.

The enzyme catalyses 4-CDP-2-C-methyl-D-erythritol + ATP = 4-CDP-2-C-methyl-D-erythritol 2-phosphate + ADP + H(+). It participates in isoprenoid biosynthesis; isopentenyl diphosphate biosynthesis via DXP pathway; isopentenyl diphosphate from 1-deoxy-D-xylulose 5-phosphate: step 3/6. Catalyzes the phosphorylation of the position 2 hydroxy group of 4-diphosphocytidyl-2C-methyl-D-erythritol. The sequence is that of 4-diphosphocytidyl-2-C-methyl-D-erythritol kinase from Ralstonia pickettii (strain 12J).